A 456-amino-acid chain; its full sequence is tRNA-2-methylthio-N(6)-dimethylallyladenosine synthase (456 aa).

Residues 19–137 (KHFFIETWGC…FPEYLHRVQV (119 aa)) form the MTTase N-terminal domain. Residues Cys28, Cys64, Cys98, Cys174, Cys178, and Cys181 each coordinate [4Fe-4S] cluster. In terms of domain architecture, Radical SAM core spans 160–392 (RKSNVKAFVT…AVNEGIVVGN (233 aa)). Residues 393–456 (KAAEGKIYEV…SFSLVGEVVE (64 aa)) enclose the TRAM domain.

This sequence belongs to the methylthiotransferase family. MiaB subfamily. As to quaternary structure, monomer. [4Fe-4S] cluster serves as cofactor.

Its subcellular location is the cytoplasm. It catalyses the reaction N(6)-dimethylallyladenosine(37) in tRNA + (sulfur carrier)-SH + AH2 + 2 S-adenosyl-L-methionine = 2-methylsulfanyl-N(6)-dimethylallyladenosine(37) in tRNA + (sulfur carrier)-H + 5'-deoxyadenosine + L-methionine + A + S-adenosyl-L-homocysteine + 2 H(+). Functionally, catalyzes the methylthiolation of N6-(dimethylallyl)adenosine (i(6)A), leading to the formation of 2-methylthio-N6-(dimethylallyl)adenosine (ms(2)i(6)A) at position 37 in tRNAs that read codons beginning with uridine. In Clostridium botulinum (strain Eklund 17B / Type B), this protein is tRNA-2-methylthio-N(6)-dimethylallyladenosine synthase.